A 193-amino-acid polypeptide reads, in one-letter code: dCTP deaminase (193 aa).

DCTP is bound by residues 110 to 115, Asp128, 136 to 138, Tyr171, Lys178, and Gln182; these read RSSLAR and VLE. The active-site Proton donor/acceptor is Glu138. The segment at 174 to 193 is disordered; the sequence is RKSAKYKDQQEAVASRISQD.

The protein belongs to the dCTP deaminase family. In terms of assembly, homotrimer.

The enzyme catalyses dCTP + H2O + H(+) = dUTP + NH4(+). The protein operates within pyrimidine metabolism; dUMP biosynthesis; dUMP from dCTP (dUTP route): step 1/2. Catalyzes the deamination of dCTP to dUTP. This Shewanella baltica (strain OS223) protein is dCTP deaminase.